The chain runs to 349 residues: Protein disulfide isomerase Creld2 (349 aa).

The first 22 residues, methionine 1–serine 22, serve as a signal peptide directing secretion. Residues cysteine 28–cysteine 31 carry the CXXC motif. Cystine bridges form between cysteine 28/cysteine 31, cysteine 137/cysteine 151, cysteine 145/cysteine 163, and cysteine 165/cysteine 174. Residues aspartate 133–isoleucine 175 form the EGF-like 1 domain. Asparagine 187 carries an N-linked (GlcNAc...) asparagine glycan. An FU 1 repeat occupies histidine 190 to proline 237. A glycan (N-linked (GlcNAc...) asparagine) is linked at asparagine 248. One copy of the FU 2 repeat lies at serine 250–alanine 297. Positions cysteine 260 to cysteine 263 match the CXXC motif. 4 disulfide bridges follow: cysteine 260/cysteine 263, cysteine 291/cysteine 305, cysteine 298/cysteine 314, and cysteine 316/cysteine 327. Positions aspartate 287–valine 328 constitute an EGF-like 2; calcium-binding domain.

The protein belongs to the CRELD family. As to quaternary structure, interacts with Chrna4. Component of a complex containing at least Creld2, Manf, Matn3 and Pdia4. As to expression, broadly expressed in brain (at protein level).

The protein localises to the endoplasmic reticulum. It catalyses the reaction Catalyzes the rearrangement of -S-S- bonds in proteins.. Its function is as follows. Protein disulfide isomerase. Might play a role in the unfolded protein response. May regulate transport of alpha4-beta2 neuronal acetylcholine receptor. This chain is Protein disulfide isomerase Creld2 (Creld2), found in Rattus norvegicus (Rat).